The sequence spans 207 residues: Uracil phosphoribosyltransferase (207 aa).

5-phospho-alpha-D-ribose 1-diphosphate-binding positions include arginine 77, arginine 102, and 129-137 (DPMLATGGS). Residues isoleucine 192 and 197–199 (GDA) each bind uracil. Aspartate 198 contributes to the 5-phospho-alpha-D-ribose 1-diphosphate binding site.

The protein belongs to the UPRTase family. The cofactor is Mg(2+).

It catalyses the reaction UMP + diphosphate = 5-phospho-alpha-D-ribose 1-diphosphate + uracil. The protein operates within pyrimidine metabolism; UMP biosynthesis via salvage pathway; UMP from uracil: step 1/1. With respect to regulation, allosterically activated by GTP. In terms of biological role, catalyzes the conversion of uracil and 5-phospho-alpha-D-ribose 1-diphosphate (PRPP) to UMP and diphosphate. The protein is Uracil phosphoribosyltransferase of Mycoplasma mobile (strain ATCC 43663 / 163K / NCTC 11711) (Mesomycoplasma mobile).